The chain runs to 154 residues: Superoxide dismutase [Cu-Zn] (154 aa).

3 residues coordinate Cu cation: histidine 47, histidine 49, and histidine 64. Cysteines 58 and 147 form a disulfide. Histidine 64, histidine 72, histidine 81, and aspartate 84 together coordinate Zn(2+). Cu cation is bound at residue histidine 121. The span at 125 to 136 (DDLGKGGNEESL) shows a compositional bias: basic and acidic residues. Residues 125-144 (DDLGKGGNEESLKTGNAGPR) form a disordered region. Residue arginine 144 participates in substrate binding.

The protein belongs to the Cu-Zn superoxide dismutase family. In terms of assembly, homodimer. Cu cation serves as cofactor. It depends on Zn(2+) as a cofactor.

The protein resides in the cytoplasm. It carries out the reaction 2 superoxide + 2 H(+) = H2O2 + O2. Destroys radicals which are normally produced within the cells and which are toxic to biological systems. The protein is Superoxide dismutase [Cu-Zn] (sod-1) of Neurospora crassa (strain ATCC 24698 / 74-OR23-1A / CBS 708.71 / DSM 1257 / FGSC 987).